We begin with the raw amino-acid sequence, 43 residues long: Hainantoxin F5-22.36 (43 aa).

3 cysteine pairs are disulfide-bonded: Cys-1–Cys-19, Cys-8–Cys-24, and Cys-18–Cys-38.

The protein belongs to the neurotoxin 14 (magi-1) family. 02 (HWTX-XVIc) subfamily. Expressed by the venom gland.

The protein localises to the secreted. Probable ion channel inhibitor. The sequence is that of Hainantoxin F5-22.36 from Cyriopagopus hainanus (Chinese bird spider).